A 757-amino-acid chain; its full sequence is Subtilisin-like protease SBT1.7 (757 aa).

A signal peptide spans Met1–Ser24. Residues Ser25–His106 constitute a propeptide that is removed on maturation. Residues Thr31 to His106 form the Inhibitor I9 domain. A Peptidase S8 domain is found at Arg102 to Thr610. The active-site Charge relay system is Asp139. Residue Asn170 is glycosylated (N-linked (GlcNAc...) asparagine). Residues Pro196–Thr219 are disordered. Residues Asp198 to Gly213 show a composition bias toward basic and acidic residues. His212 (charge relay system) is an active-site residue. 3 N-linked (GlcNAc...) asparagine glycosylation sites follow: Asn352, Asn376, and Asn379. Ser542 (charge relay system) is an active-site residue. N-linked (GlcNAc...) asparagine glycosylation is found at Asn631 and Asn644.

It belongs to the peptidase S8 family. In terms of tissue distribution, expressed in immature siliques and at lower levels in stems and flowers. Widely expressed at low levels.

Its subcellular location is the secreted. It is found in the cell wall. Activated by calcium. Inhibited by the serine protease inhibitors 4-(2-aminoethyl)benzenesulphonyl fluoride (AEBSF), PMSF, di-isopropyl phosphofluoridate (DFP) and soybean trypsin inhibitor (SBTI). Not inhibited by benzamidine or iodoacetamide. Leupeptin and pepstatin A have a minor inhibitory action. Functionally, serine protease. Has a substrate preference for the hydrophobic residues Phe and Ala and the basic residue Asp in the P1 position, and for Asp, Leu or Ala in the P1' position. Essential for mucilage release from seed coats. Triggers the accumulation and/or activation of cell wall modifying enzymes necessary either for the loosening of the outer primary cell wall, or to facilitate swelling of the mucilage. This is Subtilisin-like protease SBT1.7 from Arabidopsis thaliana (Mouse-ear cress).